The following is a 306-amino-acid chain: Golgi to ER traffic protein 2 (306 aa).

Residues 1–18 (MSEISDAEKRRILREKRQ) are compositionally biased toward basic and acidic residues. The tract at residues 1 to 100 (MSEISDAEKR…PPGSAEQQNG (100 aa)) is disordered. Residues 1–172 (MSEISDAEKR…VEAHNIAVNK (172 aa)) are Cytoplasmic-facing. Residues 34–57 (TGQTENSFLSTESPLDSRESTYPA) show a composition bias toward polar residues. The segment covering 68 to 77 (DSTKQMDELL) has biased composition (basic and acidic residues). The span at 78 to 90 (AKATSKTTSKASS) shows a compositional bias: low complexity. Positions 91–100 (PPGSAEQQNG) are enriched in polar residues. The helical transmembrane segment at 173–193 (LKSYTILVKWLFFLLPYLYYI) threads the bilayer. Topologically, residues 194-214 (THSARDPFQHNAVNYVLDRSN) are lumenal. A helical transmembrane segment spans residues 215 to 234 (FFTVFTTFEIVALSVYYQLL). Topologically, residues 235-281 (MSAEKSHNVNTLDNNSKILKLVSMVPPGLVPIPNLRGKVAQALQYWD) are cytoplasmic. A helical membrane pass occupies residues 282–302 (VVSMYLTDLCFAIVLAGLFQY). The Lumenal segment spans residues 303 to 306 (YHSM).

The protein belongs to the GET2 family. In terms of assembly, component of the Golgi to ER traffic (GET) complex, which is composed of GET1, GET2 and GET3. Within the complex, GET1 and GET2 form a heterotetramer which is stabilized by phosphatidylinositol binding and which binds to the GET3 homodimer.

It is found in the endoplasmic reticulum membrane. Its subcellular location is the golgi apparatus membrane. Functionally, required for the post-translational delivery of tail-anchored (TA) proteins to the endoplasmic reticulum. Together with GET1, acts as a membrane receptor for soluble GET3, which recognizes and selectively binds the transmembrane domain of TA proteins in the cytosol. The GET complex cooperates with the HDEL receptor ERD2 to mediate the ATP-dependent retrieval of resident ER proteins that contain a C-terminal H-D-E-L retention signal from the Golgi to the ER. The polypeptide is Golgi to ER traffic protein 2 (Lachancea thermotolerans (strain ATCC 56472 / CBS 6340 / NRRL Y-8284) (Yeast)).